Consider the following 71-residue polypeptide: Large ribosomal subunit protein bL31 (71 aa).

Zn(2+)-binding residues include cysteine 16, cysteine 18, cysteine 37, and cysteine 40.

This sequence belongs to the bacterial ribosomal protein bL31 family. Type A subfamily. Part of the 50S ribosomal subunit. Requires Zn(2+) as cofactor.

Its function is as follows. Binds the 23S rRNA. This is Large ribosomal subunit protein bL31 from Marinomonas sp. (strain MWYL1).